Here is a 434-residue protein sequence, read N- to C-terminus: N-acylneuraminate cytidylyltransferase (434 aa).

M1 carries the post-translational modification N-acetylmethionine. Positions 1-42 (MDSVEKGAATSVSNPRGRPSRGRPPKLQRNSRGGQGRGVEKP) are disordered. The BC1 motif motif lies at 15-31 (PRGRPSRGRPPKLQRNS). R37 and R52 each carry omega-N-methylarginine. Substrate is bound by residues R52, N62, R111, S120, S122, and Q143. Positions 200–206 (KRPRRQD) match the BC2 motif motif. R201 is a catalytic residue. The BC3 motif motif lies at 269-276 (KEKLKEIK).

This sequence belongs to the CMP-NeuNAc synthase family. As to quaternary structure, homotetramer; the active enzyme is formed by a dimer of dimers. Ubiquitously expressed. Expressed in pancreas, kidney, liver, skeletal muscle, lung, placenta, brain, heart, colon, PBL, small intestine, ovary, testis, prostate, thymus and spleen.

Its subcellular location is the nucleus. It catalyses the reaction an N-acylneuraminate + CTP = a CMP-N-acyl-beta-neuraminate + diphosphate. The protein operates within amino-sugar metabolism; N-acetylneuraminate metabolism. In terms of biological role, catalyzes the activation of N-acetylneuraminic acid (NeuNAc) to cytidine 5'-monophosphate N-acetylneuraminic acid (CMP-NeuNAc), a substrate required for the addition of sialic acid. Has some activity toward NeuNAc, N-glycolylneuraminic acid (Neu5Gc) or 2-keto-3-deoxy-D-glycero-D-galacto-nononic acid (KDN). In Homo sapiens (Human), this protein is N-acylneuraminate cytidylyltransferase (CMAS).